Here is a 114-residue protein sequence, read N- to C-terminus: Large ribosomal subunit protein uL22 (114 aa).

It belongs to the universal ribosomal protein uL22 family. As to quaternary structure, part of the 50S ribosomal subunit.

This protein binds specifically to 23S rRNA; its binding is stimulated by other ribosomal proteins, e.g. L4, L17, and L20. It is important during the early stages of 50S assembly. It makes multiple contacts with different domains of the 23S rRNA in the assembled 50S subunit and ribosome. In terms of biological role, the globular domain of the protein is located near the polypeptide exit tunnel on the outside of the subunit, while an extended beta-hairpin is found that lines the wall of the exit tunnel in the center of the 70S ribosome. This Streptococcus gordonii (strain Challis / ATCC 35105 / BCRC 15272 / CH1 / DL1 / V288) protein is Large ribosomal subunit protein uL22.